Here is a 362-residue protein sequence, read N- to C-terminus: Putative F-box protein At3g23260 (362 aa).

The 46-residue stretch at methionine 1–histidine 46 folds into the F-box domain.

This is Putative F-box protein At3g23260 from Arabidopsis thaliana (Mouse-ear cress).